The sequence spans 227 residues: uncharacterized protein (227 aa).

This is an uncharacterized protein from Caenorhabditis elegans.